A 915-amino-acid chain; its full sequence is Probable LRR receptor-like serine/threonine-protein kinase At2g16250 (915 aa).

The first 28 residues, 1-28 (MVDQRRSALGFVLLLLCLVLFFDCVVVG), serve as a signal peptide directing secretion. Residues 29–451 (QTQSRFSEKL…ISRRTVIILA (423 aa)) are Extracellular-facing. Residues Asn-71, Asn-78, Asn-101, Asn-109, Asn-150, Asn-158, and Asn-177 are each glycosylated (N-linked (GlcNAc...) asparagine). LRR repeat units lie at residues 102 to 125 (LTRL…WFGV), 127 to 150 (LLAL…TLGN), 151 to 174 (LTSL…SLGQ), 176 to 198 (LNLS…SFSS), 199 to 223 (LKNL…LGAL), 225 to 247 (KLIH…LGDL), 248 to 271 (VNLV…LRKL), 272 to 295 (SKLQ…LFSA), 297 to 320 (SQLQ…CWSL), 321 to 344 (PKLR…SYDS), and 366 to 390 (LRRF…VTGE). A glycan (N-linked (GlcNAc...) asparagine) is linked at Asn-230. A glycan (N-linked (GlcNAc...) asparagine) is linked at Asn-332. 3 N-linked (GlcNAc...) asparagine glycosylation sites follow: Asn-391, Asn-429, and Asn-437. The chain crosses the membrane as a helical span at residues 452 to 472 (AVGGGVAFILLFVILPIILVL). The Cytoplasmic portion of the chain corresponds to 473–915 (CMRHRRRAAQ…AAYGVVEDNL (443 aa)). Positions 482–503 (QRGNNDRPKPAGEASQQPPKGA) are disordered. The 285-residue stretch at 527–811 (FNDANLIKRG…IVNALENPLK (285 aa)) folds into the Protein kinase domain. ATP contacts are provided by residues 533-541 (IKRGHSGNL) and Lys-555. Residue Asp-657 is the Proton acceptor of the active site. The tract at residues 851 to 915 (TAVQAGATTS…AAYGVVEDNL (65 aa)) is disordered. The span at 859–870 (TSGGGGGGGGNG) shows a compositional bias: gly residues. A compositionally biased stretch (low complexity) spans 871 to 892 (LRNSGSQGSSGRNNNNNGNSSS).

Belongs to the protein kinase superfamily. Ser/Thr protein kinase family.

It localises to the membrane. It catalyses the reaction L-seryl-[protein] + ATP = O-phospho-L-seryl-[protein] + ADP + H(+). The enzyme catalyses L-threonyl-[protein] + ATP = O-phospho-L-threonyl-[protein] + ADP + H(+). This Arabidopsis thaliana (Mouse-ear cress) protein is Probable LRR receptor-like serine/threonine-protein kinase At2g16250.